Consider the following 602-residue polypeptide: ATP-dependent zinc metalloprotease FtsH 3 (602 aa).

Topologically, residues M1–R18 are cytoplasmic. Residues L19–A39 form a helical membrane-spanning segment. Residues A40–R117 are Periplasmic-facing. The helical transmembrane segment at A118 to V138 threads the bilayer. At S139–A602 the chain is on the cytoplasmic side. G202–T209 is a binding site for ATP. H425 serves as a coordination point for Zn(2+). E426 is a catalytic residue. Residues H429 and D501 each contribute to the Zn(2+) site.

In the central section; belongs to the AAA ATPase family. It in the C-terminal section; belongs to the peptidase M41 family. In terms of assembly, homohexamer. The cofactor is Zn(2+).

The protein resides in the cell inner membrane. Functionally, acts as a processive, ATP-dependent zinc metallopeptidase for both cytoplasmic and membrane proteins. Plays a role in the quality control of integral membrane proteins. The protein is ATP-dependent zinc metalloprotease FtsH 3 of Sorangium cellulosum (strain So ce56) (Polyangium cellulosum (strain So ce56)).